We begin with the raw amino-acid sequence, 92 residues long: uncharacterized protein (92 aa).

This is an uncharacterized protein from Escherichia coli O157:H7.